The following is a 339-amino-acid chain: Fructose-1,6-bisphosphatase isozyme 2 (339 aa).

Residues 3–10 form an important for interaction with ALDOA region; the sequence is DRSPFETD. Residues V18 and 28–32 each bind AMP; that span reads TGELT. 2 residues coordinate Mg(2+): D69 and E98. 113–114 is an AMP binding site; it reads KY. The Mg(2+) site is built by D119, L121, and D122. A substrate-binding site is contributed by D122. R141 lines the AMP pocket. Residues 204-208 carry the Nuclear localization signal motif; that stretch reads KKKGK. Residue 213–216 coordinates substrate; sequence NEGY. Residues Y216 and Y219 each carry the phosphotyrosine modification. Substrate contacts are provided by residues 245–249, Y265, and K275; that span reads YVGSM. E281 lines the Mg(2+) pocket.

Belongs to the FBPase class 1 family. Homotetramer. Interacts with ALDOA; the interaction blocks inhibition by physiological concentrations of AMP and reduces inhibition by Ca(2+). Interacts with alpha-actinin and F-actin. Mg(2+) is required as a cofactor.

Its subcellular location is the cell junction. The protein localises to the cytoplasm. The protein resides in the nucleus. It localises to the myofibril. It is found in the sarcomere. Its subcellular location is the z line. The catalysed reaction is beta-D-fructose 1,6-bisphosphate + H2O = beta-D-fructose 6-phosphate + phosphate. The protein operates within carbohydrate biosynthesis; gluconeogenesis. Its activity is regulated as follows. Subject to complex allosteric regulation. The enzyme can assume an active R-state, or an inactive T-state. Intermediate conformations may exist. AMP acts as an allosteric inhibitor. Fructose 2,6-bisphosphate acts as a competitive inhibitor. Strongly inhibited by Ca(2+). Functionally, catalyzes the hydrolysis of fructose 1,6-bisphosphate to fructose 6-phosphate in the presence of divalent cations and probably participates in glycogen synthesis from carbohydrate precursors, such as lactate. The protein is Fructose-1,6-bisphosphatase isozyme 2 (FBP2) of Oryctolagus cuniculus (Rabbit).